A 170-amino-acid chain; its full sequence is CFA/I fimbrial subunit B (170 aa).

Residues 1-23 (MKFKKTIGAMALTTMFVAVSASA) form the signal peptide.

It belongs to the fimbrial CS1 protein family. In terms of assembly, CFA/I fimbriae are rather rigid, thread-like filaments of 0.5-1 micrometer, with an apparent axial hole, and a diameter of 7 nanometers. A single CFA/I fimbria consists of about 100 identical protein subunits.

It is found in the fimbrium. Its function is as follows. Fimbriae (also called pili), polar filaments radiating from the surface of the bacterium to a length of 0.5-1.5 micrometers and numbering 100-300 per cell, enable bacteria to colonize the epithelium of specific host organs. In Escherichia coli O78:H11 (strain H10407 / ETEC), this protein is CFA/I fimbrial subunit B (cfaB).